The following is a 119-amino-acid chain: Large ribosomal subunit protein uL14 (119 aa).

Belongs to the universal ribosomal protein uL14 family. As to quaternary structure, part of the 50S ribosomal subunit. Forms a cluster with proteins L3 and L19. In the 70S ribosome, L14 and L19 interact and together make contacts with the 16S rRNA in bridges B5 and B8.

In terms of biological role, binds to 23S rRNA. Forms part of two intersubunit bridges in the 70S ribosome. The sequence is that of Large ribosomal subunit protein uL14 from Ehrlichia canis (strain Jake).